Consider the following 165-residue polypeptide: V-type proton ATPase 16 kDa proteolipid subunit (165 aa).

Topologically, residues 1–10 are lumenal; that stretch reads MSSTFSGDET. A helical transmembrane segment spans residues 11–33; it reads APFFGFLGAAAALVFSCMGAAYG. At 34–55 the chain is on the cytoplasmic side; sequence TAKSGVGVASMGVMRPELVMKS. The helical transmembrane segment at 56–76 threads the bilayer; that stretch reads IVPVVMAGVLGIYGLIIAVII. Topologically, residues 77–95 are lumenal; the sequence is STGINPKAKSYYLFDGYAH. The chain crosses the membrane as a helical span at residues 96 to 117; sequence LSSGLACGLAGLSAGMAIGIVG. At 118–129 the chain is on the cytoplasmic side; it reads DAGVRANAQQPK. The chain crosses the membrane as a helical span at residues 130-155; it reads LFVGMILILIFAEALALYGLIVGIIL. Topologically, residues 156 to 165 are lumenal; it reads SSRAGQSRAD.

It belongs to the V-ATPase proteolipid subunit family. V-ATPase is a heteromultimeric enzyme composed of a peripheral catalytic V1 complex (main components: subunits A, B, C, D, E, and F) attached to an integral membrane V0 proton pore complex (main component: the proteolipid protein; which is present as a hexamer that forms the proton-conducting pore). As to expression, higher expression in leaves, followed by roots and weakly in flowers. Expression in leaves is light-dependent.

Its subcellular location is the vacuole membrane. Functionally, proton-conducting pore forming subunit of the membrane integral V0 complex of vacuolar ATPase. V-ATPase is responsible for acidifying a variety of intracellular compartments in eukaryotic cells. Necessary for the crassulacean acid metabolism. In Kalanchoe daigremontiana (Devil's backbone), this protein is V-type proton ATPase 16 kDa proteolipid subunit.